Reading from the N-terminus, the 1295-residue chain is Phosphoribosylformylglycinamidine synthase (1295 aa).

Residues 305–327 (WPGAATGSGGEIRDEGATGRGAK) are disordered. ATP contacts are provided by residues 307 to 318 (GAATGSGGEIRD) and A678. Positions 718, 722, and 884 each coordinate Mg(2+). S886 serves as a coordination point for ATP. The Glutamine amidotransferase type-1 domain occupies 1042-1295 (VAVLREQGVN…IFRNARKQLG (254 aa)). C1135 serves as the catalytic Nucleophile. Residues H1260 and E1262 contribute to the active site.

This sequence in the N-terminal section; belongs to the FGAMS family. As to quaternary structure, monomer.

The protein localises to the cytoplasm. It carries out the reaction N(2)-formyl-N(1)-(5-phospho-beta-D-ribosyl)glycinamide + L-glutamine + ATP + H2O = 2-formamido-N(1)-(5-O-phospho-beta-D-ribosyl)acetamidine + L-glutamate + ADP + phosphate + H(+). It participates in purine metabolism; IMP biosynthesis via de novo pathway; 5-amino-1-(5-phospho-D-ribosyl)imidazole from N(2)-formyl-N(1)-(5-phospho-D-ribosyl)glycinamide: step 1/2. Phosphoribosylformylglycinamidine synthase involved in the purines biosynthetic pathway. Catalyzes the ATP-dependent conversion of formylglycinamide ribonucleotide (FGAR) and glutamine to yield formylglycinamidine ribonucleotide (FGAM) and glutamate. The chain is Phosphoribosylformylglycinamidine synthase from Escherichia coli O6:K15:H31 (strain 536 / UPEC).